Consider the following 89-residue polypeptide: Small ribosomal subunit protein uS15 (89 aa).

It belongs to the universal ribosomal protein uS15 family. In terms of assembly, part of the 30S ribosomal subunit. Forms a bridge to the 50S subunit in the 70S ribosome, contacting the 23S rRNA.

In terms of biological role, one of the primary rRNA binding proteins, it binds directly to 16S rRNA where it helps nucleate assembly of the platform of the 30S subunit by binding and bridging several RNA helices of the 16S rRNA. Its function is as follows. Forms an intersubunit bridge (bridge B4) with the 23S rRNA of the 50S subunit in the ribosome. The protein is Small ribosomal subunit protein uS15 of Caulobacter vibrioides (strain NA1000 / CB15N) (Caulobacter crescentus).